The following is a 143-amino-acid chain: Large ribosomal subunit protein uL13 (143 aa).

Belongs to the universal ribosomal protein uL13 family. In terms of assembly, part of the 50S ribosomal subunit.

Its function is as follows. This protein is one of the early assembly proteins of the 50S ribosomal subunit, although it is not seen to bind rRNA by itself. It is important during the early stages of 50S assembly. The polypeptide is Large ribosomal subunit protein uL13 (Desulfitobacterium hafniense (strain Y51)).